Here is a 333-residue protein sequence, read N- to C-terminus: 4-hydroxy-3-methylbut-2-enyl diphosphate reductase (333 aa).

[4Fe-4S] cluster is bound at residue cysteine 20. Residues histidine 49 and histidine 85 each coordinate (2E)-4-hydroxy-3-methylbut-2-enyl diphosphate. Dimethylallyl diphosphate contacts are provided by histidine 49 and histidine 85. Isopentenyl diphosphate-binding residues include histidine 49 and histidine 85. Cysteine 107 serves as a coordination point for [4Fe-4S] cluster. Residue histidine 135 coordinates (2E)-4-hydroxy-3-methylbut-2-enyl diphosphate. Histidine 135 provides a ligand contact to dimethylallyl diphosphate. Position 135 (histidine 135) interacts with isopentenyl diphosphate. Glutamate 137 (proton donor) is an active-site residue. Position 176 (threonine 176) interacts with (2E)-4-hydroxy-3-methylbut-2-enyl diphosphate. Cysteine 206 contributes to the [4Fe-4S] cluster binding site. (2E)-4-hydroxy-3-methylbut-2-enyl diphosphate-binding residues include serine 234, serine 235, asparagine 236, and serine 279. Residues serine 234, serine 235, asparagine 236, and serine 279 each contribute to the dimethylallyl diphosphate site. Isopentenyl diphosphate-binding residues include serine 234, serine 235, asparagine 236, and serine 279.

Belongs to the IspH family. [4Fe-4S] cluster is required as a cofactor.

It catalyses the reaction isopentenyl diphosphate + 2 oxidized [2Fe-2S]-[ferredoxin] + H2O = (2E)-4-hydroxy-3-methylbut-2-enyl diphosphate + 2 reduced [2Fe-2S]-[ferredoxin] + 2 H(+). It carries out the reaction dimethylallyl diphosphate + 2 oxidized [2Fe-2S]-[ferredoxin] + H2O = (2E)-4-hydroxy-3-methylbut-2-enyl diphosphate + 2 reduced [2Fe-2S]-[ferredoxin] + 2 H(+). It functions in the pathway isoprenoid biosynthesis; dimethylallyl diphosphate biosynthesis; dimethylallyl diphosphate from (2E)-4-hydroxy-3-methylbutenyl diphosphate: step 1/1. It participates in isoprenoid biosynthesis; isopentenyl diphosphate biosynthesis via DXP pathway; isopentenyl diphosphate from 1-deoxy-D-xylulose 5-phosphate: step 6/6. Catalyzes the conversion of 1-hydroxy-2-methyl-2-(E)-butenyl 4-diphosphate (HMBPP) into a mixture of isopentenyl diphosphate (IPP) and dimethylallyl diphosphate (DMAPP). Acts in the terminal step of the DOXP/MEP pathway for isoprenoid precursor biosynthesis. This chain is 4-hydroxy-3-methylbut-2-enyl diphosphate reductase, found in Rhizobium leguminosarum bv. trifolii (strain WSM2304).